A 258-amino-acid chain; its full sequence is Lysine-rich coiled-coil protein 1 (258 aa).

The disordered stretch occupies residues 142–258 (DNSTSTHQAS…MLWDQSILGF (117 aa)). The segment covering 150 to 161 (ASHKQIHQKRKR) has biased composition (basic residues). Basic and acidic residues-rich tracts occupy residues 162–175 (HPEEGREKSEEEWS), 183–213 (CKEIDLDKHKSIQRKKTEVEIETVHVSTEKL), and 220–232 (KGRDVVSKKEERK). Residues 211-248 (EKLKNRKEKKGRDVVSKKEERKRTKKKKEQGQERTEEE) are a coiled coil.

This is Lysine-rich coiled-coil protein 1 (KRCC1) from Pongo abelii (Sumatran orangutan).